Consider the following 505-residue polypeptide: Glycerol kinase (505 aa).

An ADP-binding site is contributed by threonine 14. Threonine 14, threonine 15, and serine 16 together coordinate ATP. Threonine 14 contacts sn-glycerol 3-phosphate. Arginine 18 provides a ligand contact to ADP. Sn-glycerol 3-phosphate is bound by residues arginine 84, glutamate 85, tyrosine 136, and aspartate 246. Residues arginine 84, glutamate 85, tyrosine 136, aspartate 246, and glutamine 247 each coordinate glycerol. ADP contacts are provided by threonine 268 and glycine 311. ATP contacts are provided by threonine 268, glycine 311, glutamine 315, and glycine 412. Positions 412 and 416 each coordinate ADP.

This sequence belongs to the FGGY kinase family.

It catalyses the reaction glycerol + ATP = sn-glycerol 3-phosphate + ADP + H(+). It participates in polyol metabolism; glycerol degradation via glycerol kinase pathway; sn-glycerol 3-phosphate from glycerol: step 1/1. With respect to regulation, inhibited by fructose 1,6-bisphosphate (FBP). Its function is as follows. Key enzyme in the regulation of glycerol uptake and metabolism. Catalyzes the phosphorylation of glycerol to yield sn-glycerol 3-phosphate. The polypeptide is Glycerol kinase (Vibrio cholerae serotype O1 (strain M66-2)).